Reading from the N-terminus, the 86-residue chain is Large ribosomal subunit protein bL27 (86 aa).

Gly residues predominate over residues 1 to 11 (MATKKAGGGSR). The disordered stretch occupies residues 1 to 24 (MATKKAGGGSRNGRDSAGRRLGVK).

Belongs to the bacterial ribosomal protein bL27 family.

The sequence is that of Large ribosomal subunit protein bL27 from Rickettsia africae (strain ESF-5).